A 382-amino-acid chain; its full sequence is Galactokinase (382 aa).

34-37 is a substrate binding site; it reads EHTD. 124-130 serves as a coordination point for ATP; sequence GAGLSSS. Mg(2+) contacts are provided by serine 130 and glutamate 162. Aspartate 174 acts as the Proton acceptor in catalysis. Tyrosine 223 contacts substrate.

This sequence belongs to the GHMP kinase family. GalK subfamily.

It localises to the cytoplasm. It catalyses the reaction alpha-D-galactose + ATP = alpha-D-galactose 1-phosphate + ADP + H(+). The protein operates within carbohydrate metabolism; galactose metabolism. Catalyzes the transfer of the gamma-phosphate of ATP to D-galactose to form alpha-D-galactose-1-phosphate (Gal-1-P). This chain is Galactokinase, found in Escherichia coli O17:K52:H18 (strain UMN026 / ExPEC).